Consider the following 287-residue polypeptide: Intermediate filament family orphan 2 (287 aa).

In terms of domain architecture, IF rod spans 1–254 (MNLQTMVDTL…RLIKGSADRN (254 aa)). The tract at residues 248-287 (KGSADRNSPSPSSVASSDSGSTDEIQDDLEREADVEPMVS) is disordered. Low complexity predominate over residues 255 to 267 (SPSPSSVASSDSG). The span at 271 to 287 (EIQDDLEREADVEPMVS) shows a compositional bias: acidic residues.

Belongs to the intermediate filament family.

This Rattus norvegicus (Rat) protein is Intermediate filament family orphan 2 (Iffo2).